The primary structure comprises 332 residues: UDP-3-O-acylglucosamine N-acyltransferase (332 aa).

The Proton acceptor role is filled by His235.

Belongs to the transferase hexapeptide repeat family. LpxD subfamily. As to quaternary structure, homotrimer.

It catalyses the reaction a UDP-3-O-[(3R)-3-hydroxyacyl]-alpha-D-glucosamine + a (3R)-hydroxyacyl-[ACP] = a UDP-2-N,3-O-bis[(3R)-3-hydroxyacyl]-alpha-D-glucosamine + holo-[ACP] + H(+). It functions in the pathway bacterial outer membrane biogenesis; LPS lipid A biosynthesis. Its function is as follows. Catalyzes the N-acylation of UDP-3-O-acylglucosamine using 3-hydroxyacyl-ACP as the acyl donor. Is involved in the biosynthesis of lipid A, a phosphorylated glycolipid that anchors the lipopolysaccharide to the outer membrane of the cell. This is UDP-3-O-acylglucosamine N-acyltransferase from Fusobacterium nucleatum subsp. nucleatum (strain ATCC 25586 / DSM 15643 / BCRC 10681 / CIP 101130 / JCM 8532 / KCTC 2640 / LMG 13131 / VPI 4355).